A 179-amino-acid polypeptide reads, in one-letter code: MIP18 family protein C144.16 (179 aa).

Positions 1–26 (MSANLQNENPEVKELNQLPSRVEEEE) are disordered.

Belongs to the MIP18 family.

In terms of biological role, may play a role in chromosome segregation through establishment of sister chromatid cohesion. This Schizosaccharomyces pombe (strain 972 / ATCC 24843) (Fission yeast) protein is MIP18 family protein C144.16.